Here is a 392-residue protein sequence, read N- to C-terminus: Elongation factor Tu 2 (392 aa).

A tr-type G domain is found at 10–201 (KPHVNIGTIG…AVDSYIPTPE (192 aa)). The interval 19 to 26 (GHVDHGKT) is G1. Residue 19-26 (GHVDHGKT) participates in GTP binding. Position 26 (Thr-26) interacts with Mg(2+). The tract at residues 55 to 59 (GITIS) is G2. The G3 stretch occupies residues 76–79 (DCPG). GTP contacts are provided by residues 76 to 80 (DCPGH) and 131 to 134 (NKVD). Residues 131 to 134 (NKVD) form a G4 region. A G5 region spans residues 169-171 (SAL).

The protein belongs to the TRAFAC class translation factor GTPase superfamily. Classic translation factor GTPase family. EF-Tu/EF-1A subfamily. As to quaternary structure, monomer.

It localises to the cytoplasm. It catalyses the reaction GTP + H2O = GDP + phosphate + H(+). GTP hydrolase that promotes the GTP-dependent binding of aminoacyl-tRNA to the A-site of ribosomes during protein biosynthesis. In Rhizobium etli (strain ATCC 51251 / DSM 11541 / JCM 21823 / NBRC 15573 / CFN 42), this protein is Elongation factor Tu 2.